The sequence spans 836 residues: Glutamate receptor ionotropic, kainate 1 (836 aa).

A signal peptide spans 1-30 (MERGTVLIQPGLWTRDTSWTLLYFLCYILP). The Extracellular portion of the chain corresponds to 31–561 (QTSPQVLRIG…VFSFLNPLSP (531 aa)). Residues Asn68, Asn74, Asn276, Asn379, Asn413, Asn424, and Asn431 are each glycosylated (N-linked (GlcNAc...) asparagine). Pro516, Thr518, and Arg523 together coordinate L-glutamate. Asn546 carries an N-linked (GlcNAc...) asparagine glycan. The helical transmembrane segment at 562–582 (DIWMYVLLACLGVSCVLFVIA) threads the bilayer. The Cytoplasmic portion of the chain corresponds to 583 to 638 (RFTPYEWYNPHPCNPDSDVVENNFTLLNSFWFGVGALMQQGSELMPKALSTRIVGG). Residues 639–659 (IWWFFTLIIISSYTANLAAFL) traverse the membrane as a helical segment. The Extracellular portion of the chain corresponds to 660–721 (TVERMESPID…RQPSALGVEN (62 aa)). L-glutamate contacts are provided by Ser689 and Thr690. A helical membrane pass occupies residues 722–742 (IGGIFIVLAAGLVLSVFVAIG). Over 743 to 836 (EFIYKSRKNN…RRTQRKETVA (94 aa)) the chain is Cytoplasmic.

This sequence belongs to the glutamate-gated ion channel (TC 1.A.10.1) family. GRIK1 subfamily. In terms of assembly, homotetramer or heterotetramer of pore-forming glutamate receptor subunits. Tetramers may be formed by the dimerization of dimers. Can form functional heteromeric receptors with GRIK4 and GRIK5. Interacts with KLHL17. As to expression, most abundant in the cerebellum. Also present in the suprachiasmatic nuclei of the hypothalamus.

Its subcellular location is the cell membrane. The protein resides in the postsynaptic cell membrane. The enzyme catalyses Ca(2+)(in) = Ca(2+)(out). Functionally, ionotropic glutamate receptor that functions as a cation-permeable ligand-gated ion channel, gated by L-glutamate and the glutamatergic agonist kainic acid. L-glutamate acts as an excitatory neurotransmitter at many synapses in the central nervous system. Binding of the excitatory neurotransmitter L-glutamate induces a conformation change, leading to the opening of the cation channel, and thereby converts the chemical signal to an electrical impulse. The receptor then desensitizes rapidly and enters a transient inactive state, characterized by the presence of bound agonist. The polypeptide is Glutamate receptor ionotropic, kainate 1 (Grik1) (Mus musculus (Mouse)).